Consider the following 122-residue polypeptide: Large ribosomal subunit protein uL18 (122 aa).

The protein belongs to the universal ribosomal protein uL18 family. As to quaternary structure, part of the 50S ribosomal subunit; part of the 5S rRNA/L5/L18/L25 subcomplex. Contacts the 5S and 23S rRNAs.

Its function is as follows. This is one of the proteins that bind and probably mediate the attachment of the 5S RNA into the large ribosomal subunit, where it forms part of the central protuberance. The chain is Large ribosomal subunit protein uL18 from Desulfitobacterium hafniense (strain Y51).